The primary structure comprises 157 residues: Ribosome maturation factor RimP (157 aa).

The protein belongs to the RimP family.

The protein localises to the cytoplasm. Required for maturation of 30S ribosomal subunits. This Streptococcus thermophilus (strain ATCC BAA-491 / LMD-9) protein is Ribosome maturation factor RimP.